Here is a 185-residue protein sequence, read N- to C-terminus: Translation initiation factor IF-3 (185 aa).

Belongs to the IF-3 family. As to quaternary structure, monomer.

The protein resides in the cytoplasm. Its function is as follows. IF-3 binds to the 30S ribosomal subunit and shifts the equilibrium between 70S ribosomes and their 50S and 30S subunits in favor of the free subunits, thus enhancing the availability of 30S subunits on which protein synthesis initiation begins. The chain is Translation initiation factor IF-3 from Rickettsia felis (strain ATCC VR-1525 / URRWXCal2) (Rickettsia azadi).